The chain runs to 27 residues: CKPPGSPCRVSSYNCCSSCKSYNKKCG.

Intrachain disulfides connect Cys1/Cys16, Cys8/Cys19, and Cys15/Cys26. 2 positions are modified to 4-hydroxyproline: Pro4 and Pro7.

The protein belongs to the conotoxin O1 superfamily. Expressed by the venom duct.

Its subcellular location is the secreted. In terms of biological role, omega-conotoxins act at presynaptic membranes, they bind and block voltage-gated calcium channels (Cav). In Conus radiatus (Rayed cone), this protein is Omega-conotoxin RVIA.